The primary structure comprises 1860 residues: Collagen alpha-1(XXVII) chain (1860 aa).

The N-terminal stretch at 1 to 41 (MGAGSARGARGTAAAAAARGGGFLFSWILVSFACHLASTQG) is a signal peptide. Positions 42–624 (APEDVDILQR…AGSTPFPLLM (583 aa)) are cleaved as a propeptide — N-terminal propeptide. One can recognise a Laminin G-like domain in the interval 71 to 236 (QSGFIFTQRA…NYCTHLRKQC (166 aa)). A glycan (N-linked (GlcNAc...) asparagine) is linked at Asn-271. Disordered regions lie at residues 278–608 (ALGS…TSSG), 625–772 (GPPG…GSDG), and 851–1625 (LKGD…IQLQ). Polar residues-rich tracts occupy residues 298–309 (TKPQRTSPTNPH) and 386–409 (HPTQ…QVPP). Residues 432–445 (MPRPPPPSTRPLPP) show a composition bias toward pro residues. Low complexity-rich tracts occupy residues 446–457 (TTSSSKKPIPTL) and 485–505 (TALS…RPPA). Over residues 509 to 518 (PPTSGTSTPR) the composition is skewed to polar residues. Composition is skewed to low complexity over residues 572 to 588 (TTRP…QTTP) and 599 to 608 (SSSPRPTSSG). Collagen-like domains lie at 625 to 679 (GPPG…GDPG), 688 to 747 (GAKG…PGPV), 748 to 807 (GDPG…DGNP), 808 to 867 (GELG…SGDP), 871 to 930 (GDKG…KGKP), 931 to 990 (GARG…PGPV), 1003 to 1062 (GEPG…RGAK), 1066 to 1125 (GPRG…PGTK), 1126 to 1185 (GLPG…IGQR), 1192 to 1251 (GDSG…QGEK), 1258 to 1317 (GAKG…KGIV), 1318 to 1378 (GPLG…RGKP), 1382 to 1441 (GQPG…EGIA), 1442 to 1501 (GPDG…PGQL), 1502 to 1561 (GPPG…QGPR), and 1562 to 1621 (GPPG…PGGP). The interval 625–1618 (GPPGPKGDCG…RGRPGPPGPP (994 aa)) is triple-helical region. Residues 654 to 669 (RGPPGPYGNPGLPGPP) are compositionally biased toward pro residues. The span at 714–734 (PGPAGHPGEQGQPGPEGSPGA) shows a compositional bias: low complexity. Low complexity-rich tracts occupy residues 911–924 (FPGD…NGPE) and 932–944 (ARGL…QLGP). Gly residues predominate over residues 1033–1042 (GMPGGMGTPG). Residues 1043-1053 (EPGPQGPPGSR) show a composition bias toward pro residues. Pro residues predominate over residues 1130–1142 (EPGPQGPQGPIGP). 2 stretches are compositionally biased toward basic and acidic residues: residues 1202–1220 (LKGD…EKGQ) and 1241–1253 (PEGK…EKGR). Composition is skewed to basic and acidic residues over residues 1326-1338 (KGEK…DGKA) and 1350-1360 (PVGDRGDRGEP). Over residues 1449–1458 (RDGQAGQQGE) the composition is skewed to low complexity. Positions 1572–1587 (IVGPLGILGPSGLPGP) are enriched in low complexity. Residues 1603-1620 (RGPPGPRGRPGPPGPPGG) are compositionally biased toward pro residues. Residues 1622–1860 (IQLQQDDLGA…RLEVGPACFL (239 aa)) constitute a propeptide, C-terminal propeptide. The 201-residue stretch at 1660 to 1860 (GEIFKTLHYL…RLEVGPACFL (201 aa)) folds into the Fibrillar collagen NC1 domain. Cystine bridges form between Cys-1690–Cys-1722, Cys-1731–Cys-1858, and Cys-1767–Cys-1811. Residues Asp-1708, Asn-1710, Cys-1713, and Asp-1716 each contribute to the Ca(2+) site. The N-linked (GlcNAc...) asparagine glycan is linked to Asn-1769.

It belongs to the fibrillar collagen family.

The protein resides in the secreted. It is found in the extracellular space. It localises to the extracellular matrix. In terms of biological role, plays a role during the calcification of cartilage and the transition of cartilage to bone. This chain is Collagen alpha-1(XXVII) chain (COL27A1), found in Homo sapiens (Human).